The chain runs to 354 residues: Ferrochelatase (354 aa).

Positions 214 and 295 each coordinate Fe cation.

It belongs to the ferrochelatase family.

It localises to the cytoplasm. The catalysed reaction is heme b + 2 H(+) = protoporphyrin IX + Fe(2+). It functions in the pathway porphyrin-containing compound metabolism; protoheme biosynthesis; protoheme from protoporphyrin-IX: step 1/1. In terms of biological role, catalyzes the ferrous insertion into protoporphyrin IX. In Burkholderia lata (strain ATCC 17760 / DSM 23089 / LMG 22485 / NCIMB 9086 / R18194 / 383), this protein is Ferrochelatase.